The chain runs to 1366 residues: Protein HUA2-LIKE 2 (1366 aa).

The 58-residue stretch at 24–81 folds into the PWWP domain; it reads VGDLVLAKVKGFPAWPAVVSEPEKWDASPDSKKVFVHFFGTQQIAFCNPGDVEAFTEE. Residues 111-124 show a composition bias toward basic and acidic residues; sequence LKQQERASDPKSAE. 5 disordered regions span residues 111–138, 203–319, 384–403, 427–451, and 787–808; these read LKQQ…TLMP, TYSS…SGSK, NVQT…CEEN, EANS…AQTS, and SESA…TGEK. Polar residues predominate over residues 213-252; sequence VRSQNCAPQNETCPVQRSKSPSRLQTEKLQSSMLQNSDGG. Over residues 391–403 the composition is skewed to basic and acidic residues; the sequence is SHEKFTERPCEEN. Residues 787 to 803 show a composition bias toward polar residues; the sequence is SESANDMQNNSSGSPNI. The CID domain occupies 836–977; that stretch reads DVQSTRESYE…HHIRELDSHS (142 aa). Disordered regions lie at residues 1027–1076 and 1128–1366; these read LKDE…TAER and TSHQ…QRSD. Residues 1032–1052 are compositionally biased toward acidic residues; that stretch reads GGSDSEGGCDSEGGSDSDGGD. The span at 1057–1066 shows a compositional bias: basic and acidic residues; that stretch reads TPEHESRILE. Positions 1138-1152 are enriched in pro residues; sequence PPLPSSSPPPPPAPP. The span at 1191 to 1223 shows a compositional bias: polar residues; that stretch reads LSGSTMHYQGPESSYISGVQLTNSIPQADGSNF. Pro residues predominate over residues 1229–1244; the sequence is PSHPHPHPPPPPPPPQ. Basic and acidic residues-rich tracts occupy residues 1251-1262 and 1275-1298; these read EPGHVLKSHRDA and CDER…RDNW. Residues 1299–1309 show a composition bias toward low complexity; sequence RYPPSSSYGSR.

Expressed throughout young primordia, and vegetative and reproductive apices.

Its subcellular location is the nucleus. In terms of biological role, probable transcription factor that acts with partial redundancy with HULK1 and HULK3. Plays diverse and essential roles in the control of plant development, physiology and flowering time. This Arabidopsis thaliana (Mouse-ear cress) protein is Protein HUA2-LIKE 2.